The primary structure comprises 253 residues: 5'-nucleotidase SurE 2 (253 aa).

A divalent metal cation is bound by residues Asp-8, Asp-9, Ser-39, and Asn-92.

It belongs to the SurE nucleotidase family. The cofactor is a divalent metal cation.

It localises to the cytoplasm. The enzyme catalyses a ribonucleoside 5'-phosphate + H2O = a ribonucleoside + phosphate. Its function is as follows. Nucleotidase that shows phosphatase activity on nucleoside 5'-monophosphates. This chain is 5'-nucleotidase SurE 2, found in Burkholderia lata (strain ATCC 17760 / DSM 23089 / LMG 22485 / NCIMB 9086 / R18194 / 383).